The sequence spans 502 residues: Nondiscriminating glutamyl-tRNA synthetase EARS2, mitochondrial (502 aa).

The transit peptide at 1–20 (MAGMLREVCGAAASGLRVRF) directs the protein to the mitochondrion. Residue 19-21 (RFG) participates in L-glutamate binding. A 'HIGH' region motif is present at residues 24–32 (PTGFLHLGG). An ATP-binding site is contributed by His-29. L-glutamate contacts are provided by residues Glu-55, 207-211 (YHLAN), and Arg-225. ATP-binding positions include Glu-228 and 263-267 (KLSKR). The 'KMSKS' region signature appears at 263 to 267 (KLSKR).

This sequence belongs to the class-I aminoacyl-tRNA synthetase family. Glutamate--tRNA ligase type 1 subfamily.

It is found in the mitochondrion matrix. It carries out the reaction tRNA(Glx) + L-glutamate + ATP = L-glutamyl-tRNA(Glx) + AMP + diphosphate. It catalyses the reaction tRNA(Glu) + L-glutamate + ATP = L-glutamyl-tRNA(Glu) + AMP + diphosphate. The catalysed reaction is tRNA(Gln) + L-glutamate + ATP = L-glutamyl-tRNA(Gln) + AMP + diphosphate. In terms of biological role, non-discriminating glutamyl-tRNA synthetase that catalyzes aminoacylation of both mitochondrial tRNA(Glu) and tRNA(Gln) and participates in RNA aminoacylation for mitochondrial protein translation. Attachs glutamate to tRNA(Glu) or tRNA(Gln) in a two-step reaction: glutamate is first activated by ATP to form Glu-AMP and then transferred to the acceptor end of tRNA(Glu) or tRNA(Gln). The protein is Nondiscriminating glutamyl-tRNA synthetase EARS2, mitochondrial of Gallus gallus (Chicken).